The primary structure comprises 88 residues: uncharacterized protein (88 aa).

The first 22 residues, 1–22 (MGLTLKEHAEVCMALAESSASA), serve as a signal peptide directing secretion.

This is an uncharacterized protein from Haemophilus influenzae (strain ATCC 51907 / DSM 11121 / KW20 / Rd).